The primary structure comprises 86 residues: Large ribosomal subunit protein bL27 (86 aa).

Residues 1–10 (MAQKKGGGST) are compositionally biased toward gly residues. The interval 1 to 21 (MAQKKGGGSTRNGRDSESKRL) is disordered.

This sequence belongs to the bacterial ribosomal protein bL27 family.

This is Large ribosomal subunit protein bL27 from Cupriavidus taiwanensis (strain DSM 17343 / BCRC 17206 / CCUG 44338 / CIP 107171 / LMG 19424 / R1) (Ralstonia taiwanensis (strain LMG 19424)).